Here is a 177-residue protein sequence, read N- to C-terminus: Bifunctional protein PyrR (177 aa).

A PRPP-binding motif is present at residues 99–111; that stretch reads VVLVDDVLFTGRT.

Belongs to the purine/pyrimidine phosphoribosyltransferase family. PyrR subfamily.

It catalyses the reaction UMP + diphosphate = 5-phospho-alpha-D-ribose 1-diphosphate + uracil. Its function is as follows. Regulates the transcription of the pyrimidine nucleotide (pyr) operon in response to exogenous pyrimidines. In terms of biological role, also displays a weak uracil phosphoribosyltransferase activity which is not physiologically significant. This Geobacter sp. (strain M21) protein is Bifunctional protein PyrR.